Here is a 247-residue protein sequence, read N- to C-terminus: Homeobox protein BarH-like 1b (247 aa).

Disordered regions lie at residues 118 to 138 (RGKL…GRRS) and 197 to 247 (GGGL…SQEE). Positions 135–194 (GRRSRTVFTELQLMGLEKRFEKQKYLSTPDRIDLAESLGLSQLQVKTWYQNRRMKWKKIV) form a DNA-binding region, homeobox. Basic and acidic residues predominate over residues 223 to 234 (EQERARDAEKPP).

This sequence belongs to the BAR homeobox family. In terms of assembly, interacts with serum response factor (SRF). As to expression, expressed in smooth muscle cells of the upper digestive organs and their attached arteries and to craniofacial structures.

The protein localises to the nucleus. Transcription factor which is involved with the serum response factor (SRF) in the smooth muscle cell-specific transcription of the beta-tropomyosin gene in the upper digestive organs and their attached arteries. This chain is Homeobox protein BarH-like 1b (BARX1B), found in Gallus gallus (Chicken).